Consider the following 339-residue polypeptide: Very-long-chain 3-oxoacyl-CoA reductase (339 aa).

Residues 19–39 form a helical membrane-spanning segment; it reads VALFLLSIGGLFTACKLFSFC. Residues leucine 64, lysine 105, aspartate 119, aspartate 127, asparagine 146, tyrosine 213, lysine 217, valine 246, and serine 248 each coordinate NADP(+). Tyrosine 213 functions as the Proton donor in the catalytic mechanism. Lysine 217 acts as the Lowers pKa of active site Tyr in catalysis.

This sequence belongs to the short-chain dehydrogenases/reductases (SDR) family.

The protein resides in the endoplasmic reticulum membrane. It catalyses the reaction a very-long-chain (3R)-3-hydroxyacyl-CoA + NADP(+) = a very-long-chain 3-oxoacyl-CoA + NADPH + H(+). The protein operates within lipid metabolism; fatty acid biosynthesis. Component of the microsomal membrane bound fatty acid elongation system, which produces the 26-carbon very long-chain fatty acids (VLCFA) from palmitate. Catalyzes the reduction of the 3-ketoacyl-CoA intermediate that is formed in each cycle of fatty acid elongation. VLCFAs serve as precursors for ceramide and sphingolipids. The sequence is that of Very-long-chain 3-oxoacyl-CoA reductase from Ajellomyces capsulatus (strain NAm1 / WU24) (Darling's disease fungus).